The chain runs to 378 residues: Alpha-D-ribose 1-methylphosphonate 5-triphosphate diphosphatase (378 aa).

The protein belongs to the metallo-dependent hydrolases superfamily.

It carries out the reaction alpha-D-ribose 1-methylphosphonate 5-triphosphate + H2O = alpha-D-ribose 1-methylphosphonate 5-phosphate + diphosphate + H(+). In terms of biological role, catalyzes the hydrolysis of alpha-D-ribose 1-methylphosphonate triphosphate (RPnTP) to form alpha-D-ribose 1-methylphosphonate phosphate (PRPn) and diphosphate. The sequence is that of Alpha-D-ribose 1-methylphosphonate 5-triphosphate diphosphatase (phnM) from Escherichia coli (strain K12).